The sequence spans 291 residues: Small ribosomal subunit protein uS2 (291 aa).

The interval N270–N291 is disordered.

The protein belongs to the universal ribosomal protein uS2 family.

This is Small ribosomal subunit protein uS2 from Rickettsia bellii (strain OSU 85-389).